Reading from the N-terminus, the 864-residue chain is DNA mismatch repair protein MutS (864 aa).

ATP is bound at residue 607–614 (GPNMGGKS).

This sequence belongs to the DNA mismatch repair MutS family.

Functionally, this protein is involved in the repair of mismatches in DNA. It is possible that it carries out the mismatch recognition step. This protein has a weak ATPase activity. This Neisseria meningitidis serogroup C / serotype 2a (strain ATCC 700532 / DSM 15464 / FAM18) protein is DNA mismatch repair protein MutS.